Here is a 71-residue protein sequence, read N- to C-terminus: Small ribosomal subunit protein bS21 (71 aa).

This sequence belongs to the bacterial ribosomal protein bS21 family.

This Alteromonas mediterranea (strain DSM 17117 / CIP 110805 / LMG 28347 / Deep ecotype) protein is Small ribosomal subunit protein bS21.